The primary structure comprises 271 residues: MDFIGRFEEIAGALKALAGTEKMGKIIVYTPPEKKDEPETCGYMEEGIIRRYYAGKDCHIYSNYPESSREISFHKEKEDRIIKNCLRKDRGTGKNQKKKKISRKKDNWKKRKEKSRLPEGYTLRPAVQADASAMASLYSQGFELYPTPLHMENYILETMHSNVLYFLVEKYGKIVSLASAEMDPKNRNAEITDCLTIPSERGKGHMKELIRALEKELSERSFLISYTLCRASAPGINAAFSSLGYAFTGRLVNNCRIGNGFEDMNIWCRML.

The interval 86 to 122 (LRKDRGTGKNQKKKKISRKKDNWKKRKEKSRLPEGYT) is disordered. A compositionally biased stretch (basic residues) spans 95–114 (NQKKKKISRKKDNWKKRKEK). Residues 121 to 269 (YTLRPAVQAD…GFEDMNIWCR (149 aa)) enclose the N-acetyltransferase domain.

This sequence belongs to the acetyltransferase family.

The catalysed reaction is (3S)-3,6-diaminohexanoate + acetyl-CoA = (3S)-6-acetamido-3-aminohexanoate + CoA + H(+). In terms of biological role, catalyzes the acetylation of beta-lysine to N6-acetyl-beta-lysine, a compatible solute produced by methanogenic archaea that helps cells to cope with salt stress. The protein is Beta-lysine N(6)-acetyltransferase of Methanosarcina mazei (strain ATCC BAA-159 / DSM 3647 / Goe1 / Go1 / JCM 11833 / OCM 88) (Methanosarcina frisia).